Here is a 423-residue protein sequence, read N- to C-terminus: Galactosylceramide sulfotransferase (423 aa).

Topologically, residues 1–14 (MPLPQKKRWESMAK) are cytoplasmic. The helical; Signal-anchor for type II membrane protein transmembrane segment at 15-35 (GLVLGALFTSFLLLLYSYAVP) threads the bilayer. Residues 36-423 (PLYTGLASTT…WKFIRDFLRW (388 aa)) lie on the Lumenal side of the membrane. The segment at 48-70 (GAAPCSPAPREPEAPTSANGSAG) is disordered. 3 N-linked (GlcNAc...) asparagine glycosylation sites follow: Asn66, Asn156, and Asn312.

Belongs to the galactose-3-O-sulfotransferase family.

The protein localises to the golgi apparatus membrane. It carries out the reaction a beta-D-galactosyl-(1&lt;-&gt;1')-N-acylsphing-4-enine + 3'-phosphoadenylyl sulfate = an N-acyl-1-beta-D-(3-O-sulfo)-galactosyl-sphing-4-enine + adenosine 3',5'-bisphosphate + H(+). The enzyme catalyses a 1-O-alkyl-2-acyl-3-O-(beta-D-galactosyl)-sn-glycerol + 3'-phosphoadenylyl sulfate = a 1-O-alkyl-2-acyl-3-(beta-D-3-sulfogalactosyl)-sn-glycerol + adenosine 3',5'-bisphosphate + H(+). It catalyses the reaction a beta-D-Gal-(1&lt;-&gt;1')-ceramide + 3'-phosphoadenylyl sulfate = 1-(3-O-sulfo-beta-D-galactosyl)-ceramide + adenosine 3',5'-bisphosphate + H(+). The catalysed reaction is a 1,2-diacyl-3-O-(beta-D-galactosyl)-sn-glycerol + 3'-phosphoadenylyl sulfate = 1,2-diacyl-3-(3-O-sulfo-beta-D-galactosyl)-sn-glycerol + adenosine 3',5'-bisphosphate + H(+). It carries out the reaction a beta-D-Gal-(1-&gt;4)-beta-D-Glc-(1&lt;-&gt;1)-Cer(d18:1(4E)) + 3'-phosphoadenylyl sulfate = beta-D-3-sulfogalactosyl-(1-&gt;4)-beta-D-glucosyl-(1&lt;-&gt;1')-N-acylsphing-4-enine + adenosine 3',5'-bisphosphate + H(+). The protein operates within lipid metabolism; sphingolipid metabolism. Functionally, catalyzes the transfer of a sulfate group to position 3 of non-reducing beta-galactosyl residues in glycerolipids and sphingolipids, therefore participates in the biosynthesis of sulfoglycolipids. Catalyzes the synthesis of galactosylceramide sulfate (sulfatide), a major lipid component of the myelin sheath and of monogalactosylalkylacylglycerol sulfate (seminolipid), present in spermatocytes. Seems to prefer beta-glycosides at the non-reducing termini of sugar chains attached to a lipid moiety. Also acts on lactosylceramide, galactosyl 1-alkyl-2-sn-glycerol and galactosyl diacylglycerol (in vitro). The polypeptide is Galactosylceramide sulfotransferase (Bos taurus (Bovine)).